The primary structure comprises 392 residues: MQPIGTALRPHATRVMLLGAGELGKEVAIESQRLGLEVIAVDRYADAPAMQVAHRSHVMDMRDGDSLRALIERERPDYIVPEIEAIATQTLLQLESDGQRVVPCARAVQLTMNREGIRRLAAETLALPTSPYRFADSIEAFRQAVTEIGYPCFAKPVMSSSGKGQSILRNDDDVAPAWQYARQGARGDADSVIVEGEVRFDFEITLLTVQASDGIHFCAPIGHRQQEGDYRESWQPQAMSPAALARAQAIAASVVRALGGYGLFGVELFVRGDEVIFSEVSPRPHDTGLVTLVSQDLSEFALHVRAFLGLPIGVIRQFGPCASAVLLPSLHSDDVTFANLSQALRPATQLRLFGKPHIDGVRRLGVALAWGESTETARQRARDSAASVVIRP.

Residues 22–23 (EL) and Glu-82 contribute to the N(1)-(5-phospho-beta-D-ribosyl)glycinamide site. ATP-binding positions include Arg-114, Lys-155, 160–165 (SSGKGQ), 195–198 (EGEV), and Glu-203. The 190-residue stretch at 119-308 (RLAAETLALP…EFALHVRAFL (190 aa)) folds into the ATP-grasp domain. Residues Glu-267 and Glu-279 each coordinate Mg(2+). N(1)-(5-phospho-beta-D-ribosyl)glycinamide is bound by residues Asp-286, Lys-355, and 362–363 (RR).

It belongs to the PurK/PurT family. In terms of assembly, homodimer.

The catalysed reaction is N(1)-(5-phospho-beta-D-ribosyl)glycinamide + formate + ATP = N(2)-formyl-N(1)-(5-phospho-beta-D-ribosyl)glycinamide + ADP + phosphate + H(+). It participates in purine metabolism; IMP biosynthesis via de novo pathway; N(2)-formyl-N(1)-(5-phospho-D-ribosyl)glycinamide from N(1)-(5-phospho-D-ribosyl)glycinamide (formate route): step 1/1. Involved in the de novo purine biosynthesis. Catalyzes the transfer of formate to 5-phospho-ribosyl-glycinamide (GAR), producing 5-phospho-ribosyl-N-formylglycinamide (FGAR). Formate is provided by PurU via hydrolysis of 10-formyl-tetrahydrofolate. The sequence is that of Formate-dependent phosphoribosylglycinamide formyltransferase from Edwardsiella ictaluri (strain 93-146).